Consider the following 485-residue polypeptide: 1-aminocyclopropane-1-carboxylate synthase 2 (485 aa).

Substrate is bound by residues glutamate 55 and tyrosine 92. Lysine 278 carries the post-translational modification N6-(pyridoxal phosphate)lysine. Serine 460 is subject to Phosphoserine.

It belongs to the class-I pyridoxal-phosphate-dependent aminotransferase family. In terms of assembly, homodimer and heterodimer. In vivo, the relevance of heterodimerization with other ACS enzymes is however unsure. Requires pyridoxal 5'-phosphate as cofactor. In terms of processing, phosphorylated on Ser 460; phosphorylation may regulate its turnover. May be processed at its C-terminus.

It catalyses the reaction S-adenosyl-L-methionine = 1-aminocyclopropane-1-carboxylate + S-methyl-5'-thioadenosine + H(+). It functions in the pathway alkene biosynthesis; ethylene biosynthesis via S-adenosyl-L-methionine; ethylene from S-adenosyl-L-methionine: step 1/2. In terms of biological role, 1-aminocyclopropane-1-carboxylate synthase (ACS) enzymes catalyze the conversion of S-adenosyl-L-methionine (SAM) into 1-aminocyclopropane-1-carboxylate (ACC), a direct precursor of ethylene. The polypeptide is 1-aminocyclopropane-1-carboxylate synthase 2 (ACS2) (Solanum lycopersicum (Tomato)).